We begin with the raw amino-acid sequence, 545 residues long: Glucose-6-phosphate isomerase (545 aa).

Catalysis depends on Glu345, which acts as the Proton donor. Catalysis depends on residues His376 and Lys514.

Belongs to the GPI family.

The protein localises to the cytoplasm. The catalysed reaction is alpha-D-glucose 6-phosphate = beta-D-fructose 6-phosphate. It participates in carbohydrate biosynthesis; gluconeogenesis. Its pathway is carbohydrate degradation; glycolysis; D-glyceraldehyde 3-phosphate and glycerone phosphate from D-glucose: step 2/4. Catalyzes the reversible isomerization of glucose-6-phosphate to fructose-6-phosphate. In Leptothrix cholodnii (strain ATCC 51168 / LMG 8142 / SP-6) (Leptothrix discophora (strain SP-6)), this protein is Glucose-6-phosphate isomerase.